Reading from the N-terminus, the 119-residue chain is MTTENIISGIAIADLAPYRFGKITSTGIGFGTSTVSDDSISIDADGVIINSRAIYTAGMYVDLKVNGVQKVEIKEGESIAPGDYVIPSTDGSGKAVKSPIKAGFKVASVEGNYCTIILR.

This is an uncharacterized protein from Methanocaldococcus jannaschii (strain ATCC 43067 / DSM 2661 / JAL-1 / JCM 10045 / NBRC 100440) (Methanococcus jannaschii).